The sequence spans 166 residues: Crossover junction endodeoxyribonuclease RuvC (166 aa).

Residues Asp11, Glu71, and Asp142 contribute to the active site. Positions 11, 71, and 142 each coordinate Mg(2+).

It belongs to the RuvC family. In terms of assembly, homodimer which binds Holliday junction (HJ) DNA. The HJ becomes 2-fold symmetrical on binding to RuvC with unstacked arms; it has a different conformation from HJ DNA in complex with RuvA. In the full resolvosome a probable DNA-RuvA(4)-RuvB(12)-RuvC(2) complex forms which resolves the HJ. The cofactor is Mg(2+).

The protein localises to the cytoplasm. It carries out the reaction Endonucleolytic cleavage at a junction such as a reciprocal single-stranded crossover between two homologous DNA duplexes (Holliday junction).. In terms of biological role, the RuvA-RuvB-RuvC complex processes Holliday junction (HJ) DNA during genetic recombination and DNA repair. Endonuclease that resolves HJ intermediates. Cleaves cruciform DNA by making single-stranded nicks across the HJ at symmetrical positions within the homologous arms, yielding a 5'-phosphate and a 3'-hydroxyl group; requires a central core of homology in the junction. The consensus cleavage sequence is 5'-(A/T)TT(C/G)-3'. Cleavage occurs on the 3'-side of the TT dinucleotide at the point of strand exchange. HJ branch migration catalyzed by RuvA-RuvB allows RuvC to scan DNA until it finds its consensus sequence, where it cleaves and resolves the cruciform DNA. In Maricaulis maris (strain MCS10) (Caulobacter maris), this protein is Crossover junction endodeoxyribonuclease RuvC.